The following is a 191-amino-acid chain: MKVGIIMGSVRAKRVCPEIAAYVKRTIENSEELIDQKLKIQVVDLQQIALPLYEDDDELIPAQIKSVDEYADSKTRSWSRIVNALDIIVFVTPQYNWGYPAALKNAIDRLYHEWHGKPALVVSYGGHGGSKCNDQLQEVLHGLKMNVIGGVAVKIPVGTIPLPEDIVPQLSVHNEEILQLLASCIETTRNK.

Residues arginine 11, 94 to 97 (QYNW), and tyrosine 124 contribute to the FMN site.

In terms of assembly, homodimer.

The protein localises to the cytoplasm. The protein resides in the nucleus. The catalysed reaction is FMNH2 + NADP(+) = FMN + NADPH + 2 H(+). It carries out the reaction FMNH2 + NAD(+) = FMN + NADH + 2 H(+). Its function is as follows. Has several reductase activities that are NAD(P)H-dependent and involve FMN as a cofactor, ferricyanide being the best substrate for reduction. May be involved in ferric iron assimilation. The sequence is that of NAD(P)H-dependent FMN reductase LOT6 (LOT6) from Saccharomyces cerevisiae (strain ATCC 204508 / S288c) (Baker's yeast).